The primary structure comprises 490 residues: Bifunctional protein HldE (490 aa).

A ribokinase region spans residues 1–330; that stretch reads MNNFDTLLQS…RKILPHASLA (330 aa). 205–208 serves as a coordination point for ATP; it reads NRKE. The active site involves Asp275. Residues 358 to 490 are cytidylyltransferase; sequence FTNGCFDILH…LVEKAREGTS (133 aa).

The protein in the N-terminal section; belongs to the carbohydrate kinase PfkB family. In the C-terminal section; belongs to the cytidylyltransferase family. As to quaternary structure, homodimer.

It carries out the reaction D-glycero-beta-D-manno-heptose 7-phosphate + ATP = D-glycero-beta-D-manno-heptose 1,7-bisphosphate + ADP + H(+). It catalyses the reaction D-glycero-beta-D-manno-heptose 1-phosphate + ATP + H(+) = ADP-D-glycero-beta-D-manno-heptose + diphosphate. It functions in the pathway nucleotide-sugar biosynthesis; ADP-L-glycero-beta-D-manno-heptose biosynthesis; ADP-L-glycero-beta-D-manno-heptose from D-glycero-beta-D-manno-heptose 7-phosphate: step 1/4. Its pathway is nucleotide-sugar biosynthesis; ADP-L-glycero-beta-D-manno-heptose biosynthesis; ADP-L-glycero-beta-D-manno-heptose from D-glycero-beta-D-manno-heptose 7-phosphate: step 3/4. Its function is as follows. Catalyzes the phosphorylation of D-glycero-D-manno-heptose 7-phosphate at the C-1 position to selectively form D-glycero-beta-D-manno-heptose-1,7-bisphosphate. Catalyzes the ADP transfer from ATP to D-glycero-beta-D-manno-heptose 1-phosphate, yielding ADP-D-glycero-beta-D-manno-heptose. This chain is Bifunctional protein HldE, found in Rhodopseudomonas palustris (strain HaA2).